A 447-amino-acid chain; its full sequence is Argininosuccinate lyase (447 aa).

It belongs to the lyase 1 family. Argininosuccinate lyase subfamily.

Its subcellular location is the cytoplasm. The catalysed reaction is 2-(N(omega)-L-arginino)succinate = fumarate + L-arginine. Its pathway is amino-acid biosynthesis; L-arginine biosynthesis; L-arginine from L-ornithine and carbamoyl phosphate: step 3/3. This chain is Argininosuccinate lyase, found in Sulfolobus acidocaldarius (strain ATCC 33909 / DSM 639 / JCM 8929 / NBRC 15157 / NCIMB 11770).